Reading from the N-terminus, the 371-residue chain is Cytochrome b (371 aa).

A run of 4 helical transmembrane segments spans residues 25–45 (FGSMLLSCLMLQVTTGFFLAV), 69–90 (WMMQNTHAIGASLFFICIYIHI), 105–125 (WMSGTTLLITLMATAFFGYIL), and 170–190 (FFALHFILPFIIISLSSLHIL). Residues His75 and His89 each coordinate heme b. Heme b-binding residues include His174 and His188. Position 193 (His193) interacts with a ubiquinone. 4 helical membrane passes run 218–238 (YKDLLLLTLLLTLLLLTTFFL), 280–300 (LGGALALVASILIIMTMPFTH), 312–332 (MSQLMFWTLISTFMTITWAAT), and 339–358 (FMMISQTASMIYFMFFISNP).

This sequence belongs to the cytochrome b family. In terms of assembly, the cytochrome bc1 complex contains 3 respiratory subunits (MT-CYB, CYC1 and UQCRFS1), 2 core proteins (UQCRC1 and UQCRC2) and probably 6 low-molecular weight proteins. It depends on heme b as a cofactor.

It is found in the mitochondrion inner membrane. Functionally, component of the ubiquinol-cytochrome c reductase complex (complex III or cytochrome b-c1 complex) that is part of the mitochondrial respiratory chain. The b-c1 complex mediates electron transfer from ubiquinol to cytochrome c. Contributes to the generation of a proton gradient across the mitochondrial membrane that is then used for ATP synthesis. This chain is Cytochrome b (MT-CYB), found in Casarea dussumieri (Round Island keel-scaled boa).